The primary structure comprises 158 residues: 3-hydroxyacyl-[acyl-carrier-protein] dehydratase FabZ (158 aa).

The active site involves His61.

It belongs to the thioester dehydratase family. FabZ subfamily.

The protein localises to the cytoplasm. The catalysed reaction is a (3R)-hydroxyacyl-[ACP] = a (2E)-enoyl-[ACP] + H2O. Involved in unsaturated fatty acids biosynthesis. Catalyzes the dehydration of short chain beta-hydroxyacyl-ACPs and long chain saturated and unsaturated beta-hydroxyacyl-ACPs. This Methylobacterium radiotolerans (strain ATCC 27329 / DSM 1819 / JCM 2831 / NBRC 15690 / NCIMB 10815 / 0-1) protein is 3-hydroxyacyl-[acyl-carrier-protein] dehydratase FabZ.